A 267-amino-acid chain; its full sequence is Large ribosomal subunit protein uL4 (267 aa).

This sequence belongs to the universal ribosomal protein uL4 family. As to quaternary structure, part of the 50S ribosomal subunit.

In terms of biological role, one of the primary rRNA binding proteins, this protein initially binds near the 5'-end of the 23S rRNA. It is important during the early stages of 50S assembly. It makes multiple contacts with different domains of the 23S rRNA in the assembled 50S subunit and ribosome. Forms part of the polypeptide exit tunnel. This is Large ribosomal subunit protein uL4 from Saccharolobus islandicus (strain L.S.2.15 / Lassen #1) (Sulfolobus islandicus).